A 247-amino-acid chain; its full sequence is Aliphatic sulfonates import ATP-binding protein SsuB 3 (247 aa).

Residues 28–242 form the ABC transporter domain; sequence VSVRGLQRRY…ALRSILLEEL (215 aa). 60-67 serves as a coordination point for ATP; that stretch reads GESGCGKT.

Belongs to the ABC transporter superfamily. Aliphatic sulfonates importer (TC 3.A.1.17.2) family. The complex is composed of two ATP-binding proteins (SsuB), two transmembrane proteins (SsuC) and a solute-binding protein (SsuA).

It localises to the cell inner membrane. It carries out the reaction ATP + H2O + aliphatic sulfonate-[sulfonate-binding protein]Side 1 = ADP + phosphate + aliphatic sulfonateSide 2 + [sulfonate-binding protein]Side 1.. Its function is as follows. Part of the ABC transporter complex SsuABC involved in aliphatic sulfonates import. Responsible for energy coupling to the transport system. The chain is Aliphatic sulfonates import ATP-binding protein SsuB 3 from Paraburkholderia xenovorans (strain LB400).